The following is an 841-amino-acid chain: 27S pre-rRNA (guanosine(2922)-2'-O)-methyltransferase (841 aa).

S-adenosyl-L-methionine contacts are provided by Gly58, Trp60, Asp78, Asp94, and Asp119. The Proton acceptor role is filled by Lys159. Residues 360 to 389 adopt a coiled-coil conformation; sequence QEKQRLNVKRERRRKNEMKQKELQRMQMNM. A phosphoserine mark is found at Ser455 and Ser464. 2 disordered regions span residues 480 to 534 and 565 to 654; these read RDAK…DDEA and NNVE…HSRD. Residues 505-517 show a composition bias toward basic and acidic residues; that stretch reads SLEKKEEEGKDYI. Residues 518–534 show a composition bias toward acidic residues; sequence EDNDDEGVEGDSDDDEA. Position 529 is a phosphoserine (Ser529). Positions 574-585 are enriched in polar residues; sequence NTVNDGIMSSES. Residues 598–607 show a composition bias toward basic and acidic residues; the sequence is HEEMHQKQDE. 2 stretches are compositionally biased toward acidic residues: residues 608–621 and 629–641; these read ADSS…DSDF and ASEE…DSEE. Residues 642–654 show a composition bias toward basic and acidic residues; that stretch reads EKNQTKKEKHSRD.

It belongs to the class I-like SAM-binding methyltransferase superfamily. RNA methyltransferase RlmE family. SPB1 subfamily. Component of the nucleolar and nucleoplasmic pre-60S ribosomal particle. Interacts with the snoRNA-associated proteins NOP1 and NOP58.

It is found in the nucleus. It localises to the nucleolus. It catalyses the reaction guanosine(2922) in 27S pre-rRNA + S-adenosyl-L-methionine = 2'-O-methylguanosine(2922) in 27S pre-rRNA + S-adenosyl-L-homocysteine + H(+). Required for proper assembly of pre-ribosomal particles during the biogenesis of the 60S ribosomal subunit. Specifically methylates the guanosine in position 2922 of the 25S rRNA at the stage of 27S pre-rRNA maturation. Also methylates the uridine in position 2921 in the absence of methylation of this residue guided by snoRNA snR52 at the stage of 35S pre-rRNA maturation. In Saccharomyces cerevisiae (strain ATCC 204508 / S288c) (Baker's yeast), this protein is 27S pre-rRNA (guanosine(2922)-2'-O)-methyltransferase.